Consider the following 142-residue polypeptide: Large ribosomal subunit protein uL11 (142 aa).

The protein belongs to the universal ribosomal protein uL11 family. As to quaternary structure, part of the ribosomal stalk of the 50S ribosomal subunit. Interacts with L10 and the large rRNA to form the base of the stalk. L10 forms an elongated spine to which L12 dimers bind in a sequential fashion forming a multimeric L10(L12)X complex. One or more lysine residues are methylated.

Functionally, forms part of the ribosomal stalk which helps the ribosome interact with GTP-bound translation factors. This chain is Large ribosomal subunit protein uL11, found in Bartonella quintana (strain Toulouse) (Rochalimaea quintana).